We begin with the raw amino-acid sequence, 178 residues long: uncharacterized protein (178 aa).

Helical transmembrane passes span 29–49 (AATGFCGGVLWSFVAYIAYLF), 76–96 (VISIILIGVISIGAAFLYFLL), 105–125 (PGILYGLVLWLLVFFVFNPIF), and 139–159 (IITTICIYLLYGLFVGYSISF).

Its subcellular location is the cell membrane. This is an uncharacterized protein from Bacillus subtilis (strain 168).